Consider the following 392-residue polypeptide: DNA replication and repair protein RecF (392 aa).

30 to 37 is an ATP binding site; sequence GPNAAGKT.

This sequence belongs to the RecF family.

It is found in the cytoplasm. Functionally, the RecF protein is involved in DNA metabolism; it is required for DNA replication and normal SOS inducibility. RecF binds preferentially to single-stranded, linear DNA. It also seems to bind ATP. The sequence is that of DNA replication and repair protein RecF from Chloroflexus aggregans (strain MD-66 / DSM 9485).